Consider the following 806-residue polypeptide: Plasminogen (806 aa).

An N-terminal signal peptide occupies residues 1 to 19; the sequence is MEYGKVIFLFLLFLKSGQG. Residues 20–98 form the PAN domain; it reads ESLENYIKTE…RDVVLFEKRI (79 aa). 21 cysteine pairs are disulfide-bonded: C49–C73, C53–C61, C103–C181, C124–C164, C152–C176, C185–C262, C188–C316, C206–C245, C234–C257, C275–C352, C296–C335, C324–C347, C371–C448, C392–C431, C420–C443, C476–C555, C497–C538, C526–C550, C563–C681, C573–C581, and C603–C619. Kringle domains follow at residues 102 to 181, 184 to 262, 274 to 352, 370 to 448, and 475 to 555; these read DCKS…VPEC, ECMH…IPRC, QCLK…IPSC, ECYE…LEKC, and DCMY…IPQC. Residues 577 to 804 enclose the Peptidase S1 domain; the sequence is IVGGCYAQPH…YISWIEDVMK (228 aa). Position 593 is a phosphoserine (S593). Residues H618 and D661 each act as charge relay system in the active site. S684 carries the phosphoserine modification. Disulfide bonds link C695/C762, C725/C741, and C752/C780. Residue S756 is the Charge relay system of the active site.

It belongs to the peptidase S1 family. Plasminogen subfamily. In terms of assembly, interacts with CSPG4 and AMOT. Interacts (via the Kringle domains) with HRG; the interaction tethers PLG to the cell surface and enhances its activation. Interacts (via Kringle 4 domain) with ADA; the interaction stimulates PLG activation when in complex with DPP4. Angiostatin: Interacts with ATP5F1A; the interaction inhibits most of the angiogenic effects of angiostatin. In terms of processing, in the presence of the inhibitor, the activation involves only cleavage after Arg-576, yielding two chains held together by two disulfide bonds. In the absence of the inhibitor, the activation involves additionally the removal of the activation peptide.

The protein resides in the secreted. It catalyses the reaction Preferential cleavage: Lys-|-Xaa &gt; Arg-|-Xaa, higher selectivity than trypsin. Converts fibrin into soluble products.. Its activity is regulated as follows. Converted into plasmin by plasminogen activators, both plasminogen and its activator being bound to fibrin. Activated with catalytic amounts of streptokinase. Its function is as follows. Plasmin dissolves the fibrin of blood clots and acts as a proteolytic factor in a variety of other processes including embryonic development, tissue remodeling, tumor invasion, and inflammation. In ovulation, weakens the walls of the Graafian follicle. It activates the urokinase-type plasminogen activator, collagenases and several complement zymogens, such as C1, C4 and C5. Cleavage of fibronectin and laminin leads to cell detachment and apoptosis. Also cleaves fibrin, thrombospondin and von Willebrand factor. Its role in tissue remodeling and tumor invasion may be modulated by CSPG4. Binds to cells. In Notamacropus eugenii (Tammar wallaby), this protein is Plasminogen (PLG).